Reading from the N-terminus, the 457-residue chain is tRNA modification GTPase MnmE (457 aa).

Arg-22, Glu-83, and Arg-122 together coordinate (6S)-5-formyl-5,6,7,8-tetrahydrofolate. The region spanning 219-378 is the TrmE-type G domain; sequence GLATAIIGRP…LEEAIKALFF (160 aa). Asn-229 is a binding site for K(+). GTP is bound by residues 229-234, 248-254, and 273-276; these read NVGKSS, TDIAGTT, and DTAG. Ser-233 provides a ligand contact to Mg(2+). Positions 248, 250, and 253 each coordinate K(+). A Mg(2+)-binding site is contributed by Thr-254. Residue Lys-457 coordinates (6S)-5-formyl-5,6,7,8-tetrahydrofolate.

It belongs to the TRAFAC class TrmE-Era-EngA-EngB-Septin-like GTPase superfamily. TrmE GTPase family. In terms of assembly, homodimer. Heterotetramer of two MnmE and two MnmG subunits. It depends on K(+) as a cofactor.

Its subcellular location is the cytoplasm. Exhibits a very high intrinsic GTPase hydrolysis rate. Involved in the addition of a carboxymethylaminomethyl (cmnm) group at the wobble position (U34) of certain tRNAs, forming tRNA-cmnm(5)s(2)U34. The protein is tRNA modification GTPase MnmE of Listeria innocua serovar 6a (strain ATCC BAA-680 / CLIP 11262).